Consider the following 291-residue polypeptide: Glycine--tRNA ligase alpha subunit (291 aa).

Belongs to the class-II aminoacyl-tRNA synthetase family. As to quaternary structure, tetramer of two alpha and two beta subunits.

It is found in the cytoplasm. It catalyses the reaction tRNA(Gly) + glycine + ATP = glycyl-tRNA(Gly) + AMP + diphosphate. This chain is Glycine--tRNA ligase alpha subunit, found in Microcystis aeruginosa (strain NIES-843 / IAM M-2473).